A 428-amino-acid polypeptide reads, in one-letter code: Sarcosine reductase complex component B subunit alpha (428 aa).

Cys242 carries the pyruvic acid (Cys) modification.

As to quaternary structure, heterotetramer of two alpha and two beta subunits. Component of the sarcosine reductase complex, together with components A and C. PB is substrate specific. Post-translationally, the peptide chain is cleaved into beta and alpha chains, and the alpha chain N-terminal cysteine is deaminated and oxidized to form a reactive pyruvoyl group.

It carries out the reaction acetyl phosphate + methylamine + [thioredoxin]-disulfide + H2O = sarcosine + [thioredoxin]-dithiol + phosphate + H(+). In the first step of sarcosine reductase, the substrate is bound to component PB via a Schiff base intermediate. Then the PB-activated substrate is nucleophilically attacked by the selenol anion of component PA to transform it to a carboxymethylated selenoether and the respective amine. By action of component PC, acetyl phosphate is formed, leaving component PA in its oxidized state. Finally component PA becomes reduced by the thioredoxin system to start a new catalytic cycle of reductive deamination. This is Sarcosine reductase complex component B subunit alpha (grdG) from Peptoclostridium acidaminophilum (Eubacterium acidaminophilum).